The chain runs to 165 residues: Protein SprT (165 aa).

The SprT-like domain occupies 19–163 (REKLAQANLK…RCVKCGEPLV (145 aa)). His78 lines the Zn(2+) pocket. Glu79 is an active-site residue. His82 is a Zn(2+) binding site.

The protein belongs to the SprT family. Requires Zn(2+) as cofactor.

It is found in the cytoplasm. The sequence is that of Protein SprT from Enterobacter sp. (strain 638).